Reading from the N-terminus, the 341-residue chain is MPKPNHSTAPLPFPILIGDIGGTNARFSILTDAYAEPKQFPNVRTADFATIDEAIQKGVLDKTAVQPRSAILAVAGPINDDEIPLTNCDWVVRPKTMIEGLGIEDVLVVNDFEAQALAVAALSDENRERIGDATGDMIASRVVLGPGTGLGVGGLVHAQHSWIPVPGEGGHVDLGPRSKRDYQLFPHIETIESRVSAEQILCGRGLVNLYNAICIVDGIQPTMKDPADITSHALAGSDKAAVETVSLFATYLGRVAGDMAMVFMARGGVYLSGGISQKILPALKKPEFRMAFEDKAPHTALLRTIPTYVVTHPLAALAGLSSYARMPANFGVSTEGRRWRR.

18 to 23 (GDIGGT) is a binding site for ATP.

It belongs to the bacterial glucokinase family.

The protein localises to the cytoplasm. It catalyses the reaction D-glucose + ATP = D-glucose 6-phosphate + ADP + H(+). The polypeptide is Glucokinase (Rhizobium etli (strain CIAT 652)).